The chain runs to 404 residues: Ubiquitin-like modifier-activating enzyme 5 (404 aa).

Ser45 bears the Phosphoserine mark. ATP contacts are provided by Gly83, Asp104, Lys127, Asn150, and Asn184. Zn(2+) contacts are provided by Cys226 and Cys229. The active-site Glycyl thioester intermediate is Cys250. Residues Cys303 and Cys308 each contribute to the Zn(2+) site. The short motif at 334-346 (IIHEDNEWGIELV) is the UFM1-interacting sequence (UIS) element. Residues 347 to 377 (SEVSEEELKNSSGPVPDLPEGITVAYTIPKK) are linker. Ser358 and Ser393 each carry phosphoserine. A UFC1-binding sequence (UFC) motif is present at residues 389–404 (DSGESLEDLMAKMKNM).

Belongs to the ubiquitin-activating E1 family. UBA5 subfamily. Homodimer; homodimerization is required for UFM1 activation. Interacts (via UIS motif) with UFM1; binds UFM1 via a trans-binding mechanism in which UFM1 interacts with distinct sites in both subunits of the UBA5 homodimer. Interacts (via C-terminus) with UFC1. Interacts (via UIS motif) with GABARAPL2 and, with lower affinity, with GABARAP and GABARAPL1.

The protein resides in the cytoplasm. The protein localises to the nucleus. It localises to the endoplasmic reticulum membrane. It is found in the golgi apparatus. Functionally, E1-like enzyme which specifically catalyzes the first step in ufmylation. Activates UFM1 by first adenylating its C-terminal glycine residue with ATP, and thereafter linking this residue to the side chain of a cysteine residue in E1, yielding a UFM1-E1 thioester and free AMP. Activates UFM1 via a trans-binding mechanism, in which UFM1 interacts with distinct sites in both subunits of the UBA5 homodimer. Trans-binding also promotes stabilization of the UBA5 homodimer, and enhances ATP-binding. Transfer of UFM1 from UBA5 to the E2-like enzyme UFC1 also takes place using a trans mechanism. Ufmylation plays a key role in various processes, such as ribosome recycling, response to DNA damage, interferon response or reticulophagy (also called ER-phagy). Ufmylation is essential for erythroid differentiation of both megakaryocytes and erythrocytes. The sequence is that of Ubiquitin-like modifier-activating enzyme 5 from Pongo abelii (Sumatran orangutan).